We begin with the raw amino-acid sequence, 317 residues long: Pantothenate kinase (317 aa).

95–102 (GSVAVGKS) lines the ATP pocket.

The protein belongs to the prokaryotic pantothenate kinase family.

Its subcellular location is the cytoplasm. It carries out the reaction (R)-pantothenate + ATP = (R)-4'-phosphopantothenate + ADP + H(+). Its pathway is cofactor biosynthesis; coenzyme A biosynthesis; CoA from (R)-pantothenate: step 1/5. This is Pantothenate kinase from Myxococcus xanthus (strain DK1622).